Consider the following 242-residue polypeptide: Prosalusin (242 aa).

The signal sequence occupies residues 1-26; that stretch reads MAAATRSCRPWGSLLGLIWLVSAAAA. The propeptide occupies 27–189; that stretch reads SWDLSSLRCN…SSWVVYGTNY (163 aa). Residue 93-100 participates in ATP binding; sequence GWTGTGKS. Residue Asn-149 is glycosylated (N-linked (GlcNAc...) asparagine).

Belongs to the ClpA/ClpB family. Torsin subfamily.

The protein localises to the secreted. Salusin may be a endocrine and/or paracrine factor able to increase intracellular calcium concentrations and induce cell mitogenesis. Salusin may also be a potent hypotensive peptide. The chain is Prosalusin (TOR2A) from Bos taurus (Bovine).